A 325-amino-acid chain; its full sequence is D-xylose 1-dehydrogenase (NADP(+)) 2 (325 aa).

Residues 1–22 (MMFGILGTAGIGVKSVIPAVQA) form the signal peptide.

The protein belongs to the Gfo/Idh/MocA family. In terms of assembly, homotetramer.

It is found in the secreted. It catalyses the reaction D-xylose + NADP(+) = D-xylono-1,5-lactone + NADPH + H(+). NADP-dependent D-xylose dehydrogenase involved in the degradation of D-xylose, a major component of hemicelluloses such as xylan. Even if it shows D-xylose dehydrogenase activity, it is not essential for D-xylose degradation. The polypeptide is D-xylose 1-dehydrogenase (NADP(+)) 2 (Haloferax volcanii (strain ATCC 29605 / DSM 3757 / JCM 8879 / NBRC 14742 / NCIMB 2012 / VKM B-1768 / DS2) (Halobacterium volcanii)).